The following is a 92-amino-acid chain: UPF0473 protein BC_4380 (92 aa).

Belongs to the UPF0473 family.

The protein is UPF0473 protein BC_4380 of Bacillus cereus (strain ATCC 14579 / DSM 31 / CCUG 7414 / JCM 2152 / NBRC 15305 / NCIMB 9373 / NCTC 2599 / NRRL B-3711).